A 339-amino-acid polypeptide reads, in one-letter code: Holliday junction branch migration complex subunit RuvB (339 aa).

The interval 1–187 (MQGFEDENRI…FGVICKLDYY (187 aa)) is large ATPase domain (RuvB-L). Residues Leu-26, Arg-27, Gly-68, Lys-71, Thr-72, Thr-73, 134 to 136 (EDF), Arg-177, Tyr-187, and Arg-224 each bind ATP. Thr-72 serves as a coordination point for Mg(2+). Positions 188–258 (TVDELSKIVL…VAKDALELLG (71 aa)) are small ATPAse domain (RuvB-S). The segment at 261-339 (SLGLDFVDEK…HLKIPYPNEK (79 aa)) is head domain (RuvB-H). The DNA site is built by Arg-297, Arg-316, and Arg-321.

The protein belongs to the RuvB family. As to quaternary structure, homohexamer. Forms an RuvA(8)-RuvB(12)-Holliday junction (HJ) complex. HJ DNA is sandwiched between 2 RuvA tetramers; dsDNA enters through RuvA and exits via RuvB. An RuvB hexamer assembles on each DNA strand where it exits the tetramer. Each RuvB hexamer is contacted by two RuvA subunits (via domain III) on 2 adjacent RuvB subunits; this complex drives branch migration. In the full resolvosome a probable DNA-RuvA(4)-RuvB(12)-RuvC(2) complex forms which resolves the HJ.

The protein localises to the cytoplasm. It carries out the reaction ATP + H2O = ADP + phosphate + H(+). In terms of biological role, the RuvA-RuvB-RuvC complex processes Holliday junction (HJ) DNA during genetic recombination and DNA repair, while the RuvA-RuvB complex plays an important role in the rescue of blocked DNA replication forks via replication fork reversal (RFR). RuvA specifically binds to HJ cruciform DNA, conferring on it an open structure. The RuvB hexamer acts as an ATP-dependent pump, pulling dsDNA into and through the RuvAB complex. RuvB forms 2 homohexamers on either side of HJ DNA bound by 1 or 2 RuvA tetramers; 4 subunits per hexamer contact DNA at a time. Coordinated motions by a converter formed by DNA-disengaged RuvB subunits stimulates ATP hydrolysis and nucleotide exchange. Immobilization of the converter enables RuvB to convert the ATP-contained energy into a lever motion, pulling 2 nucleotides of DNA out of the RuvA tetramer per ATP hydrolyzed, thus driving DNA branch migration. The RuvB motors rotate together with the DNA substrate, which together with the progressing nucleotide cycle form the mechanistic basis for DNA recombination by continuous HJ branch migration. Branch migration allows RuvC to scan DNA until it finds its consensus sequence, where it cleaves and resolves cruciform DNA. The protein is Holliday junction branch migration complex subunit RuvB of Clostridioides difficile (strain 630) (Peptoclostridium difficile).